Reading from the N-terminus, the 189-residue chain is Protein YOP1 (189 aa).

The Cytoplasmic portion of the chain corresponds to 1–35 (MSQIIDQVQAALQNIDKELEKYPALKELEKQIPVP). Residues 36-55 (KSYILLGFVGFYFILIFLNI) form a helical membrane-spanning segment. The Lumenal portion of the chain corresponds to 56 to 57 (GG). Residues 58-78 (IGQLLSNIAGLVIPGYYSLLA) traverse the membrane as a helical segment. At 79–88 (LETPGKADDT) the chain is on the cytoplasmic side. Residues 89 to 105 (QYLTYWVVFATLNVFEF) form a helical membrane-spanning segment. Residues 106 to 108 (WSK) lie on the Lumenal side of the membrane. Residues 109-127 (AILYWVPFYYLFKTAFLLY) traverse the membrane as a helical segment. Residues 128–189 (IGLPQYGGAE…PQGHSTGVSH (62 aa)) are Cytoplasmic-facing.

Belongs to the DP1 family. Oligomer.

The protein localises to the endoplasmic reticulum membrane. The protein resides in the golgi apparatus membrane. Required to generate and maintain the structure of the tubular endoplasmic reticulum network and the vacuole. Induces high curvature in membranes and causes membrane tubule formation. Involved in membrane/vesicle trafficking. The protein is Protein YOP1 (YOP1) of Yarrowia lipolytica (strain CLIB 122 / E 150) (Yeast).